Here is a 131-residue protein sequence, read N- to C-terminus: Mesogenin-1 (131 aa).

The tract at residues 22-79 (EDRSFGDSASSPESESFDSACSSPDARSSPTAGCEHAEQQKPKVKMSMRRRMKASERE) is disordered. Residues 27–45 (GDSASSPESESFDSACSSP) show a composition bias toward low complexity. Basic residues predominate over residues 63 to 73 (PKVKMSMRRRM). Residues 70–124 (RRRMKASEREKLRMRSLAEALHQLRDYLPPGYSRRGQPLTKIQTLKYTIQYIKEL) form the bHLH domain.

Coexpression of ntl and spt is required for expression.

The protein resides in the nucleus. Functionally, involved in specifying the paraxial, but not dorsal, mesoderm. May regulate the expression of T-box transcription factors required for mesoderm formation and differentiation. This Danio rerio (Zebrafish) protein is Mesogenin-1 (msgn1).